The primary structure comprises 141 residues: Large ribosomal subunit protein uL11 (141 aa).

It belongs to the universal ribosomal protein uL11 family. Part of the ribosomal stalk of the 50S ribosomal subunit. Interacts with L10 and the large rRNA to form the base of the stalk. L10 forms an elongated spine to which L12 dimers bind in a sequential fashion forming a multimeric L10(L12)X complex. In terms of processing, one or more lysine residues are methylated.

Its function is as follows. Forms part of the ribosomal stalk which helps the ribosome interact with GTP-bound translation factors. In Clostridium acetobutylicum (strain ATCC 824 / DSM 792 / JCM 1419 / IAM 19013 / LMG 5710 / NBRC 13948 / NRRL B-527 / VKM B-1787 / 2291 / W), this protein is Large ribosomal subunit protein uL11.